The following is a 257-amino-acid chain: Outer dense fiber protein 4 (257 aa).

Residues 1–41 are disordered; that stretch reads MDAEYSGNEFPRSEGERDQHQRPGKERKSGEAGWGTGELGQ. The span at 11 to 30 shows a compositional bias: basic and acidic residues; it reads PRSEGERDQHQRPGKERKSG. Phosphoserine is present on Ser64. 3 helical membrane-spanning segments follow: residues 80 to 100, 152 to 172, and 179 to 199; these read AQVL…VVAF, VTFI…FELE, and IGWS…CAIL.

As to expression, expressed in testis and sperm; especially localized to sperm tail (at protein level).

The protein resides in the membrane. In terms of biological role, component of the outer dense fibers (ODF) of spermatozoa which could be involved in sperm tail structure, sperm movement and general organization of cellular cytoskeleton. This Homo sapiens (Human) protein is Outer dense fiber protein 4 (ODF4).